Reading from the N-terminus, the 836-residue chain is DNA gyrase subunit A (836 aa).

The 467-residue stretch at L34–I500 folds into the Topo IIA-type catalytic domain. Catalysis depends on Y122, which acts as the O-(5'-phospho-DNA)-tyrosine intermediate. The GyrA-box motif lies at Q527–G533.

The protein belongs to the type II topoisomerase GyrA/ParC subunit family. Heterotetramer, composed of two GyrA and two GyrB chains. In the heterotetramer, GyrA contains the active site tyrosine that forms a transient covalent intermediate with DNA, while GyrB binds cofactors and catalyzes ATP hydrolysis.

The protein resides in the cytoplasm. The enzyme catalyses ATP-dependent breakage, passage and rejoining of double-stranded DNA.. A type II topoisomerase that negatively supercoils closed circular double-stranded (ds) DNA in an ATP-dependent manner to modulate DNA topology and maintain chromosomes in an underwound state. Negative supercoiling favors strand separation, and DNA replication, transcription, recombination and repair, all of which involve strand separation. Also able to catalyze the interconversion of other topological isomers of dsDNA rings, including catenanes and knotted rings. Type II topoisomerases break and join 2 DNA strands simultaneously in an ATP-dependent manner. The polypeptide is DNA gyrase subunit A (Chlamydia trachomatis serovar D (strain ATCC VR-885 / DSM 19411 / UW-3/Cx)).